A 221-amino-acid polypeptide reads, in one-letter code: CDC5 pindle pole body anchor protein 1 (221 aa).

Residues 142 to 221 (KNIERDNLKP…PTEDSVPHAE (80 aa)) are disordered. Phosphoserine is present on residues Ser-158, Ser-170, and Ser-175. The CDC5-binding signature appears at 165-170 (PLVTSS). The span at 166-188 (LVTSSPIHMSPLQSRQRPVSSLQ) shows a compositional bias: polar residues. The CLB3-docking motif lies at 189 to 195 (PPKGPNF). The CDC14-binding motif lies at 200-202 (PKL).

As to quaternary structure, interacts with CDC5 and CDC14. Phosphorylated by CLB3-CDK1 in metaphase which is required for correct localization at the nuclear envelop and the spindle pole body, and dephosphorylated by CDC14 in early anaphase.

It is found in the nucleus membrane. It localises to the cytoplasm. The protein localises to the cytoskeleton. The protein resides in the microtubule organizing center. Its subcellular location is the spindle pole body. In terms of biological role, specialized component of the nuclear membrane that may be involved in the connection of the spindle pole body (SPB) to the nuclear envelope. Recruits CDC5 to spindle pole bodies in metaphase. The chain is CDC5 pindle pole body anchor protein 1 from Saccharomyces cerevisiae (strain ATCC 204508 / S288c) (Baker's yeast).